Here is a 204-residue protein sequence, read N- to C-terminus: Recombination protein RecR (204 aa).

A C4-type zinc finger spans residues 59 to 74 (CTRCNTFTELEICGTC). Residues 82-181 (TLLCVVETPA…KVSRLARGVP (100 aa)) form the Toprim domain.

The protein belongs to the RecR family.

May play a role in DNA repair. It seems to be involved in an RecBC-independent recombinational process of DNA repair. It may act with RecF and RecO. This Cupriavidus metallidurans (strain ATCC 43123 / DSM 2839 / NBRC 102507 / CH34) (Ralstonia metallidurans) protein is Recombination protein RecR.